A 58-amino-acid polypeptide reads, in one-letter code: Large ribosomal subunit protein eL24 (58 aa).

Positions 6, 9, 32, and 36 each coordinate Zn(2+). A C4-type zinc finger spans residues 6–36 (CSFCGYDIEPGTGKMYVRRDGRVFYFCSGKC).

It belongs to the eukaryotic ribosomal protein eL24 family. In terms of assembly, part of the 50S ribosomal subunit. Forms a cluster with proteins L3 and L14. The cofactor is Zn(2+).

Its function is as follows. Binds to the 23S rRNA. The sequence is that of Large ribosomal subunit protein eL24 from Archaeoglobus fulgidus (strain ATCC 49558 / DSM 4304 / JCM 9628 / NBRC 100126 / VC-16).